We begin with the raw amino-acid sequence, 150 residues long: Large ribosomal subunit protein uL13 (150 aa).

It belongs to the universal ribosomal protein uL13 family. In terms of assembly, part of the 50S ribosomal subunit.

Its function is as follows. This protein is one of the early assembly proteins of the 50S ribosomal subunit, although it is not seen to bind rRNA by itself. It is important during the early stages of 50S assembly. This Chlorobium phaeobacteroides (strain BS1) protein is Large ribosomal subunit protein uL13.